Here is a 384-residue protein sequence, read N- to C-terminus: Ribosomal RNA large subunit methyltransferase G (384 aa).

Belongs to the methyltransferase superfamily. RlmG family.

It is found in the cytoplasm. It catalyses the reaction guanosine(1835) in 23S rRNA + S-adenosyl-L-methionine = N(2)-methylguanosine(1835) in 23S rRNA + S-adenosyl-L-homocysteine + H(+). Its function is as follows. Specifically methylates the guanine in position 1835 (m2G1835) of 23S rRNA. This is Ribosomal RNA large subunit methyltransferase G from Streptomyces griseus subsp. griseus (strain JCM 4626 / CBS 651.72 / NBRC 13350 / KCC S-0626 / ISP 5235).